The chain runs to 383 residues: MRMTAIISEYNPFHNGHLYQAKIARQETGADLIVAIMSGTFTQRGEPAFTDKWTRAQAAVASGEIDLVLELPFYFAVQRADRFALGGVTIAETIGAESLSFGSECGQLEPFIEAAAENQEATPRYQELMQEGLARGLSSATAASHAFREMTTTLDLTTPNNTLGYYYARAASTITLHTTKRIGSGYHDLSTGDIMSATAIRAYHATHHSLIGLPELTAETLRNAVFASFEPYYPFIRHRLLTTPLDDLMQFNGIDSSLAPRLIEGARKNETFDNFMTAVKTRRYTRTSLQRVLIYLLTSSKSSEFENIAFDRIDYVRPLAFNDNGRLALREIKQRIPVISTFEKHPWLIKESHVTAAYAVPLARYDRLEEHRRFAHFAGSVSK.

Residues 7–20 (ISEY…HLYQ), G102, N160, and 181–182 (RI) each bind ATP.

Belongs to the TmcAL family.

Its subcellular location is the cytoplasm. It carries out the reaction cytidine(34) in elongator tRNA(Met) + acetate + ATP = N(4)-acetylcytidine(34) in elongator tRNA(Met) + AMP + diphosphate. Functionally, catalyzes the formation of N(4)-acetylcytidine (ac(4)C) at the wobble position of elongator tRNA(Met), using acetate and ATP as substrates. First activates an acetate ion to form acetyladenylate (Ac-AMP) and then transfers the acetyl group to tRNA to form ac(4)C34. This chain is tRNA(Met) cytidine acetate ligase, found in Exiguobacterium sibiricum (strain DSM 17290 / CCUG 55495 / CIP 109462 / JCM 13490 / 255-15).